Here is a 190-residue protein sequence, read N- to C-terminus: Hypoxanthine/guanine phosphoribosyltransferase (190 aa).

Belongs to the purine/pyrimidine phosphoribosyltransferase family. Archaeal HPRT subfamily. Homodimer.

It is found in the cytoplasm. The catalysed reaction is IMP + diphosphate = hypoxanthine + 5-phospho-alpha-D-ribose 1-diphosphate. The enzyme catalyses GMP + diphosphate = guanine + 5-phospho-alpha-D-ribose 1-diphosphate. The protein operates within purine metabolism; IMP biosynthesis via salvage pathway; IMP from hypoxanthine: step 1/1. Functionally, catalyzes a salvage reaction resulting in the formation of IMP that is energically less costly than de novo synthesis. This chain is Hypoxanthine/guanine phosphoribosyltransferase, found in Methanothrix thermoacetophila (strain DSM 6194 / JCM 14653 / NBRC 101360 / PT) (Methanosaeta thermophila).